A 271-amino-acid chain; its full sequence is Nus factor SuhB (271 aa).

Mg(2+) contacts are provided by Glu-67, Asp-86, and Leu-88. Position 67 (Glu-67) interacts with substrate. Substrate contacts are provided by residues Leu-88–Thr-91, Arg-187, and Asp-216.

The protein belongs to the inositol monophosphatase superfamily. In terms of assembly, homodimer. The rRNA transcription and antitermination complex (rrnTAC) consists of RNA polymerase (RNAP), NusA, NusB, NusE (rpsJ), NusG, SubB, ribosomal protein S4, DNA and precursor rRNA; S4 is more flexible than other subunits. Interacts with the ribosome and with RNA polymerase. Requires Mg(2+) as cofactor.

The protein localises to the cytoplasm. The enzyme catalyses a myo-inositol phosphate + H2O = myo-inositol + phosphate. Functionally, part of the processive rRNA transcription and antitermination complex (rrnTAC). The complex forms an RNA-chaperone ring around the RNA exit tunnel of RNA polymerase (RNAP). It supports rapid transcription and antitermination of rRNA operons, cotranscriptional rRNA folding, and annealing of distal rRNA regions to allow correct ribosome biogenesis. This subunit may play a central role in organizing the structure. A ribosome-associated protein, deletion of which alters the expression of 494 genes, suggesting a role in global gene regulation. Involved in control of pathogenesis-related genes. Required for the activation of virulence factors associated with acute infections (type 3 secretion system, T3SS) while suppressing virulence factors associated with chronic infections (biofilm formation and type 6 secretion system, T6SS). It probably acts at a post-transcriptional level. The sequence is that of Nus factor SuhB from Pseudomonas aeruginosa (strain ATCC 15692 / DSM 22644 / CIP 104116 / JCM 14847 / LMG 12228 / 1C / PRS 101 / PAO1).